The sequence spans 125 residues: Small ribosomal subunit protein bS6 (125 aa).

Residues 97–125 (TEASPMKAAKEERKPLAEVENNDFEDAEE) form a disordered region. The segment covering 104 to 113 (AAKEERKPLA) has biased composition (basic and acidic residues). Residues 116–125 (ENNDFEDAEE) are compositionally biased toward acidic residues.

It belongs to the bacterial ribosomal protein bS6 family.

Its function is as follows. Binds together with bS18 to 16S ribosomal RNA. The polypeptide is Small ribosomal subunit protein bS6 (Haemophilus influenzae (strain PittEE)).